Consider the following 216-residue polypeptide: Probable GTP-binding protein EngB (216 aa).

In terms of domain architecture, EngB-type G spans 24-205 (ATPEIAFVGR…WARLAALAAE (182 aa)). Residues 32-39 (GRSNVGKS), 59-63 (GRTRA), 86-89 (DLPG), 153-156 (TKTD), and 184-186 (FSA) each bind GTP. Mg(2+) is bound by residues Ser39 and Thr61.

It belongs to the TRAFAC class TrmE-Era-EngA-EngB-Septin-like GTPase superfamily. EngB GTPase family. Mg(2+) serves as cofactor.

Functionally, necessary for normal cell division and for the maintenance of normal septation. The chain is Probable GTP-binding protein EngB from Anaeromyxobacter dehalogenans (strain 2CP-1 / ATCC BAA-258).